The primary structure comprises 547 residues: Chaperonin GroEL (547 aa).

ATP is bound by residues 30–33, K51, 87–91, G415, 479–481, and D495; these read TLGP, DGTTT, and NAA.

The protein belongs to the chaperonin (HSP60) family. As to quaternary structure, forms a cylinder of 14 subunits composed of two heptameric rings stacked back-to-back. Interacts with the co-chaperonin GroES.

It localises to the cytoplasm. It carries out the reaction ATP + H2O + a folded polypeptide = ADP + phosphate + an unfolded polypeptide.. Functionally, together with its co-chaperonin GroES, plays an essential role in assisting protein folding. The GroEL-GroES system forms a nano-cage that allows encapsulation of the non-native substrate proteins and provides a physical environment optimized to promote and accelerate protein folding. This is Chaperonin GroEL from Cupriavidus metallidurans (strain ATCC 43123 / DSM 2839 / NBRC 102507 / CH34) (Ralstonia metallidurans).